A 250-amino-acid polypeptide reads, in one-letter code: Cholesterol ring-cleaving hydrolase IpdB subunit (250 aa).

This sequence belongs to the 3-oxoacid CoA-transferase subunit B family. In terms of assembly, heterotetramer composed of 2 IpdA subunits and 2 IpdB subunits.

The enzyme catalyses (3E)-2-(2-carboxylatoethyl)-3-methyl-6-oxocyclohex-1-ene-1-carboxyl-CoA + H2O = 6-methyl-3,7-dioxodecanedioyl-CoA. It participates in steroid metabolism; cholesterol degradation. Involved in the final steps of cholesterol and steroid degradation. Opens the last steroid ring of cholesterol by catalyzing the hydrolysis of (3E)-2-(2-carboxylatoethyl)-3-methyl-6-oxocyclohex-1-ene-1-carboxyl-CoA (COCHEA-CoA) to 6-methyl-3,7-dioxodecanedioyl-CoA (MeDODA-CoA). The sequence is that of Cholesterol ring-cleaving hydrolase IpdB subunit from Mycobacterium bovis (strain ATCC BAA-935 / AF2122/97).